Consider the following 479-residue polypeptide: GTPase Obg (479 aa).

Residues 2–159 (PRFVDRVVIH…RDLTLELKTV (158 aa)) enclose the Obg domain. In terms of domain architecture, OBG-type G spans 160-340 (ADVGLVGFPS…LIFGLWQMVS (181 aa)). Residues 166–173 (GFPSAGKS), 191–195 (FTTLV), 212–215 (DVPG), 292–295 (NKID), and 321–323 (STV) contribute to the GTP site. Serine 173 and threonine 193 together coordinate Mg(2+). Positions 358 to 436 (PVPVDDSGFD…IGEMTFDWEP (79 aa)) constitute an OCT domain. The tract at residues 438-479 (TPAGGHVAMSGRGTDVRLERSDRVGAAERKAARRQRRERDDD) is disordered. The segment covering 451–467 (TDVRLERSDRVGAAERK) has biased composition (basic and acidic residues).

This sequence belongs to the TRAFAC class OBG-HflX-like GTPase superfamily. OBG GTPase family. In terms of assembly, monomer. The cofactor is Mg(2+).

Its subcellular location is the cytoplasm. An essential GTPase which binds GTP, GDP and possibly (p)ppGpp with moderate affinity, with high nucleotide exchange rates and a fairly low GTP hydrolysis rate. Plays a role in control of the cell cycle, stress response, ribosome biogenesis and in those bacteria that undergo differentiation, in morphogenesis control. The protein is GTPase Obg of Mycobacterium ulcerans (strain Agy99).